The chain runs to 308 residues: Elongation factor Ts (308 aa).

Residues 80–83 (TDFV) form an involved in Mg(2+) ion dislocation from EF-Tu region.

Belongs to the EF-Ts family.

The protein resides in the cytoplasm. Functionally, associates with the EF-Tu.GDP complex and induces the exchange of GDP to GTP. It remains bound to the aminoacyl-tRNA.EF-Tu.GTP complex up to the GTP hydrolysis stage on the ribosome. This is Elongation factor Ts from Parvibaculum lavamentivorans (strain DS-1 / DSM 13023 / NCIMB 13966).